We begin with the raw amino-acid sequence, 282 residues long: Acyl-CoA-binding domain-containing protein 6 (282 aa).

Over residues 1-12 (MASSFLPSGATT) the composition is skewed to polar residues. The segment at 1 to 34 (MASSFLPSGATTGDSGGELSSGDDSGDVESLQSP) is disordered. Residues 17-31 (GELSSGDDSGDVESL) are compositionally biased toward low complexity. Serine 41 carries the phosphoserine modification. The ACB domain maps to 42–127 (LPELFEKAAE…VKKLDPSWNP (86 aa)). An acyl-CoA contacts are provided by residues 69–73 (YARYK) and lysine 95. Residue serine 106 is modified to Phosphoserine. Tyrosine 114 serves as a coordination point for an acyl-CoA. 2 ANK repeats span residues 191-220 (EGRT…DINC) and 224-253 (EGQT…DPTL).

Monomer.

Its subcellular location is the cytoplasm. Its function is as follows. Binds long-chain acyl-coenzyme A molecules with a strong preference for unsaturated C18:1-CoA, lower affinity for unsaturated C20:4-CoA, and very weak affinity for saturated C16:0-CoA. Does not bind fatty acids. The polypeptide is Acyl-CoA-binding domain-containing protein 6 (ACBD6) (Bos taurus (Bovine)).